Here is a 985-residue protein sequence, read N- to C-terminus: DNA polymerase (985 aa).

Residues 936-972 are disordered; it reads APSASDASGKRARKGAAPSDDESGSSEDEDAPCEPKC. Positions 954 to 967 are enriched in acidic residues; that stretch reads SDDESGSSEDEDAP.

It belongs to the DNA polymerase type-B family.

It catalyses the reaction DNA(n) + a 2'-deoxyribonucleoside 5'-triphosphate = DNA(n+1) + diphosphate. Its function is as follows. Replicates the viral genome, host DNA polymerases cannot substitute for the viral enzyme in this process. The polypeptide is DNA polymerase (POL) (Orgyia pseudotsugata (Douglas-fir tussock moth)).